Here is a 777-residue protein sequence, read N- to C-terminus: Subtilisin-like protease SBT1.4 (777 aa).

An N-terminal signal peptide occupies residues 1–25 (MAKLSLSSIFFVFPLLLCFFSPSSS). A propeptide spans 26 to 110 (SSDGLESYIV…VIPDQAREIH (85 aa)) (activation peptide). The Inhibitor I9 domain occupies 32 to 110 (SYIVHVQRSH…VIPDQAREIH (79 aa)). One can recognise a Peptidase S8 domain in the interval 115-614 (PAFLGFSQNS…AGHVDPNKAL (500 aa)). Aspartate 142 serves as the catalytic Charge relay system. An N-linked (GlcNAc...) asparagine glycan is attached at asparagine 198. Positions 199-223 (GTKKHAAKESRSPRDTEGHGTHTAS) are disordered. Positions 205–218 (AKESRSPRDTEGHG) are enriched in basic and acidic residues. Histidine 217 acts as the Charge relay system in catalysis. N-linked (GlcNAc...) asparagine glycans are attached at residues asparagine 232 and asparagine 395. Positions 376 to 461 (LSLVYSGDCG…VGAKAGDQIR (86 aa)) constitute a PA domain. Serine 546 (charge relay system) is an active-site residue.

Belongs to the peptidase S8 family.

Its subcellular location is the secreted. This chain is Subtilisin-like protease SBT1.4, found in Arabidopsis thaliana (Mouse-ear cress).